The following is a 354-amino-acid chain: S-adenosylmethionine:tRNA ribosyltransferase-isomerase (354 aa).

It belongs to the QueA family. As to quaternary structure, monomer.

Its subcellular location is the cytoplasm. The catalysed reaction is 7-aminomethyl-7-carbaguanosine(34) in tRNA + S-adenosyl-L-methionine = epoxyqueuosine(34) in tRNA + adenine + L-methionine + 2 H(+). Its pathway is tRNA modification; tRNA-queuosine biosynthesis. Its function is as follows. Transfers and isomerizes the ribose moiety from AdoMet to the 7-aminomethyl group of 7-deazaguanine (preQ1-tRNA) to give epoxyqueuosine (oQ-tRNA). The chain is S-adenosylmethionine:tRNA ribosyltransferase-isomerase from Azorhizobium caulinodans (strain ATCC 43989 / DSM 5975 / JCM 20966 / LMG 6465 / NBRC 14845 / NCIMB 13405 / ORS 571).